The chain runs to 522 residues: Target of rapamycin complex 2 subunit MAPKAP1 (522 aa).

A2 carries the post-translational modification N-acetylalanine. The interaction with MAP3K2 stretch occupies residues 2–184 (AFLDNPTIIL…KKIDVYLPLH (183 aa)). Residues 2 to 267 (AFLDNPTIIL…GFSTLALVEK (266 aa)) form an interaction with NBN region. A disordered region spans residues 38–59 (LEKTHPPSVPGDSGSEVQGSSG). T86 carries the phosphothreonine modification. 4 positions are modified to phosphoserine: S128, S186, S315, and S356. Positions 139–267 (QSILSVRLEQ…GFSTLALVEK (129 aa)) constitute a CRIM domain. The interval 279-353 (LFVRINAAHG…QNAWEFCLVR (75 aa)) is SIN1-type RBD. An SIN1-type PH domain is found at 382–487 (HYKSFKVSMI…IVLKVNYILE (106 aa)). An a 1,2-diacyl-sn-glycero-3-phospho-(1D-myo-inositol-3,4,5-trisphosphate)-binding site is contributed by R393. T398 is subject to Phosphothreonine. 2 residues coordinate a 1,2-diacyl-sn-glycero-3-phospho-(1D-myo-inositol-3,4,5-trisphosphate): K428 and K464. The tract at residues 468–522 (FESDAATVSEIVLKVNYILESRASTARADYFAQKQRKLNRRTSFSFQKEKKSGQQ) is interaction with ATF2. S510 bears the Phosphoserine mark.

Belongs to the SIN1 family. Component of the mechanistic target of rapamycin complex 2 (mTORC2), consisting in two heterotretramers composed of MTOR, MLST8, RICTOR and MAPKAP1/SIN1. The mTORC2 core complex associates with PRR5/PROTOR1 and/or PRR5L/PROTOR2. Contrary to mTORC1, mTORC2 does not bind to and is not sensitive to FKBP12-rapamycin. Interacts with MAP3K2. Interacts with ATF2. Interacts with MAPK8. Interacts with GTP-bound HRAS and KRAS; inhibiting their activity. Interacts with IFNAR2. Phosphorylation at Ser-128 by PKC promotes relocalization to the perinuclear region, where the mTORC2 complex specifically mediates phosphorylation of SGK1. Phosphorylated at Thr-86 by AKT1 or RPS6KB1 in the presence of growth factors; the effect of this phosphorylation is however unclear. According to two studies, phosphorylation at Thr-86 by AKT1 is part of a positive feedback loop that increases mTORC2 activation. According to another study, phosphorylation at Thr-86 and Thr-398 by RPS6KB1 promotes dissociation from the mTORC2 complex, leading to inhibit mTORC2 signaling.

It is found in the cell membrane. It localises to the endoplasmic reticulum membrane. Its subcellular location is the early endosome membrane. The protein resides in the late endosome membrane. The protein localises to the lysosome membrane. It is found in the golgi apparatus membrane. It localises to the mitochondrion outer membrane. Its subcellular location is the cytoplasm. The protein resides in the perinuclear region. The protein localises to the nucleus. With respect to regulation, phosphatidylinositol 3,4,5-trisphosphate (PI(3,4,5)P3) promotes MTOR activation by relieving MAPKAP1/SIN1-mediated inhibition of MTOR that takes place in absence of PI(3,4,5)P3. Functionally, component of the mechanistic target of rapamycin complex 2 (mTORC2), which transduces signals from growth factors to pathways involved in proliferation, cytoskeletal organization, lipogenesis and anabolic output. In response to growth factors, mTORC2 phosphorylates and activates AGC protein kinase family members, including AKT (AKT1, AKT2 and AKT3), PKC (PRKCA, PRKCB and PRKCE) and SGK1. In contrast to mTORC1, mTORC2 is nutrient-insensitive. Within the mTORC2 complex, MAPKAP1/SIN1 acts as a substrate adapter which recognizes and binds AGC protein kinase family members for phosphorylation by MTOR. mTORC2 plays a critical role in AKT1 activation by mediating phosphorylation of different sites depending on the context, such as 'Thr-450', 'Ser-473', 'Ser-477' or 'Thr-479', facilitating the phosphorylation of the activation loop of AKT1 on 'Thr-308' by PDPK1/PDK1 which is a prerequisite for full activation. mTORC2 catalyzes the phosphorylation of SGK1 at 'Ser-422' and of PRKCA on 'Ser-657'. The mTORC2 complex also phosphorylates various proteins involved in insulin signaling, such as FBXW8 and IGF2BP1. mTORC2 acts upstream of Rho GTPases to regulate the actin cytoskeleton, probably by activating one or more Rho-type guanine nucleotide exchange factors. mTORC2 promotes the serum-induced formation of stress-fibers or F-actin. MAPKAP1 inhibits MAP3K2 by preventing its dimerization and autophosphorylation. Inhibits HRAS and KRAS independently of mTORC2 complex. Enhances osmotic stress-induced phosphorylation of ATF2 and ATF2-mediated transcription. Involved in ciliogenesis, regulates cilia length through its interaction with CCDC28B independently of mTORC2 complex. This Rattus norvegicus (Rat) protein is Target of rapamycin complex 2 subunit MAPKAP1.